A 638-amino-acid polypeptide reads, in one-letter code: Chaperone protein DnaK (638 aa).

Thr197 carries the post-translational modification Phosphothreonine; by autocatalysis. The interval 600-638 (SGAQGGAQAGPGAGAGQQANQGSSNNKEDIQDADFEEVK) is disordered. Positions 602-614 (AQGGAQAGPGAGA) are enriched in gly residues. The span at 615–624 (GQQANQGSSN) shows a compositional bias: low complexity. The span at 625–638 (NKEDIQDADFEEVK) shows a compositional bias: basic and acidic residues.

The protein belongs to the heat shock protein 70 family.

In terms of biological role, acts as a chaperone. This chain is Chaperone protein DnaK, found in Phocaeicola vulgatus (strain ATCC 8482 / DSM 1447 / JCM 5826 / CCUG 4940 / NBRC 14291 / NCTC 11154) (Bacteroides vulgatus).